The primary structure comprises 1813 residues: Latent-transforming growth factor beta-binding protein 2 (1813 aa).

The N-terminal stretch at 1-35 (MRAPTTARCSGCIQRVRWRGFLPLVLAVLMGTSHA) is a signal peptide. Residues 94-115 (NPGWLAEAEARRPPRTQQLRRV) form a heparin-binding region. Residues 103 to 152 (ARRPPRTQQLRRVQPPVQTRRSHPRGQQQIAARAAPSVARLETPQRPAAA) form a disordered region. A compositionally biased stretch (polar residues) spans 108-132 (RTQQLRRVQPPVQTRRSHPRGQQQI). N-linked (GlcNAc...) asparagine glycosylation occurs at Asn-175. Positions 181 to 213 (IKPVCQPPCQNRGSCSRPQVCICRSGFRGARCE) constitute an EGF-like 1 domain. Disulfide bonds link Cys-185–Cys-195, Cys-189–Cys-201, and Cys-203–Cys-212. Residues 220-305 (EFDPQNARPV…QLMSNALPSG (86 aa)) form a disordered region. Residues 226–243 (ARPVPRRSVERAPGPHRS) are heparin-binding. A compositionally biased stretch (pro residues) spans 257–266 (LVPPPSPPPS). Positions 293-302 (ANGQLMSNAL) are enriched in polar residues. Asn-328 carries an N-linked (GlcNAc...) asparagine glycan. 329–339 (LTEKIKKIKVV) serves as a coordination point for heparin. The EGF-like 2 domain maps to 381 to 413 (RIYFCQIPCLNGGRCIGRDECWCPANSTGKFCH). 3 disulfide bridges follow: Cys-385–Cys-395, Cys-389–Cys-401, and Cys-403–Cys-412. The N-linked (GlcNAc...) asparagine glycan is linked to Asn-406. Residue Ser-491 is modified to Phosphoserine. The disordered stretch occupies residues 492 to 524 (VETRASHRPHGNLGHSPWASNSIPARAGEAPRP). A TB 1 domain is found at 536-588 (GQCYLSTVNGQCANPLGSLTSQEDCCGSVGTFWGVTSCAPCPPRQEGPAFPVI). Disulfide bonds link Cys-538–Cys-560, Cys-547–Cys-573, and Cys-561–Cys-576. Asn-603 carries an N-linked (GlcNAc...) asparagine glycan. One can recognise an EGF-like 3; calcium-binding domain in the interval 609 to 649 (DINECLTLGLCKDSECVNTRGSYLCTCRPGLMLDPSRSRCV). 7 cysteine pairs are disulfide-bonded: Cys-613–Cys-624, Cys-619–Cys-633, Cys-635–Cys-648, Cys-661–Cys-683, Cys-670–Cys-696, Cys-684–Cys-699, and Cys-685–Cys-711. Residues 659 to 711 (GLCYRSLGSGTCTLPLVHRITKQICCCSRVGKAWGSTCEQCPLPGTEAFREIC) enclose the TB 2 domain. Disordered regions lie at residues 730 to 761 (KAEE…QPLR) and 787 to 819 (SAPH…PAEE). In terms of domain architecture, EGF-like 4 spans 835 to 877 (DFDPCFAGASNICGPGTCVSLPNGYRCVCSPGYQLHPSQDYCT). Intrachain disulfides connect Cys-839–Cys-852, Cys-847–Cys-861, Cys-863–Cys-876, Cys-882–Cys-893, Cys-887–Cys-902, Cys-904–Cys-919, Cys-925–Cys-936, Cys-931–Cys-945, Cys-947–Cys-959, Cys-965–Cys-976, Cys-971–Cys-985, Cys-988–Cys-999, Cys-1005–Cys-1016, Cys-1011–Cys-1025, Cys-1027–Cys-1040, Cys-1046–Cys-1057, Cys-1052–Cys-1066, Cys-1069–Cys-1082, Cys-1088–Cys-1099, Cys-1094–Cys-1108, Cys-1111–Cys-1124, Cys-1130–Cys-1142, Cys-1137–Cys-1151, Cys-1153–Cys-1165, Cys-1171–Cys-1183, Cys-1177–Cys-1192, Cys-1194–Cys-1207, Cys-1213–Cys-1224, Cys-1219–Cys-1233, Cys-1235–Cys-1249, Cys-1255–Cys-1268, Cys-1263–Cys-1277, Cys-1281–Cys-1293, Cys-1299–Cys-1311, Cys-1305–Cys-1320, Cys-1322–Cys-1335, Cys-1341–Cys-1353, Cys-1348–Cys-1362, Cys-1364–Cys-1378, Cys-1405–Cys-1428, Cys-1415–Cys-1440, Cys-1429–Cys-1443, Cys-1430–Cys-1455, Cys-1481–Cys-1494, Cys-1489–Cys-1503, Cys-1505–Cys-1518, Cys-1524–Cys-1534, Cys-1529–Cys-1543, and Cys-1545–Cys-1558. The region spanning 878–920 (DDNECMRNPCEGRGRCVNSVGSYSCLCYPGYTLVTLGDTQECQ) is the EGF-like 5; calcium-binding domain. An EGF-like 6; calcium-binding domain is found at 921–960 (DIDECEQPGVCSGGRCSNTEGSYHCECDRGYIMVRKGHCQ). In terms of domain architecture, EGF-like 7; calcium-binding spans 961–1000 (DINECRHPGTCPDGRCVNSPGSYTCLACEEGYVGQSGSCV). The EGF-like 8; calcium-binding domain occupies 1001–1041 (DVNECLTPGICTHGRCINMEGSFRCSCEPGYEVTPDKKGCR). An EGF-like 9; calcium-binding domain is found at 1042–1083 (DVDECASRASCPTGLCLNTEGSFTCSACQSGYWVNEDGTACE). Positions 1084–1125 (DLDECAFPGVCPTGVCTNTVGSFSCKDCDQGYRPNPLGNRCE) constitute an EGF-like 10; calcium-binding domain. Residues 1126 to 1166 (DVDECEGPQSSCRGGECKNTEGSYQCLCHQGFQLVNGTMCE) enclose the EGF-like 11; calcium-binding domain. N-linked (GlcNAc...) asparagine glycosylation is present at Asn-1161. Positions 1167–1208 (DVNECVGEEHCAPHGECLNSLGSFFCLCAPGFASAEGGTRCQ) constitute an EGF-like 12; calcium-binding domain. One can recognise an EGF-like 13; calcium-binding domain in the interval 1209-1250 (DVDECAATDPCPGGHCVNTEGSFSCLCETASFQPSPDSGECL). The 44-residue stretch at 1251-1294 (DIDECEDREDPVCGAWRCENSPGSYRCILDCQPGFYVAPNGDCI) folds into the EGF-like 14; calcium-binding domain. The 42-residue stretch at 1295-1336 (DIDECANDTVCGNHGFCDNTDGSFRCLCDQGFETSPSGWECV) folds into the EGF-like 15; calcium-binding domain. An N-linked (GlcNAc...) asparagine glycan is attached at Asn-1301. One can recognise an EGF-like 16; calcium-binding domain in the interval 1337 to 1379 (DVNECELMMAVCGDALCENVEGSFLCLCASDLEEYDAEEGHCR). In terms of domain architecture, TB 3 spans 1403-1455 (MECYSEHNGGPPCSQILGQNSTQAECCCTQGARWGKACAPCPSEDSVEFSQLC). Residue Asn-1422 is glycosylated (N-linked (GlcNAc...) asparagine). Residues 1477-1519 (DADECVLFGPALCQNGRCSNIVPGYICLCNPGYHYDASSRKCQ) enclose the EGF-like 17; calcium-binding domain. The EGF-like 18; calcium-binding domain maps to 1520 to 1559 (DHNECQDLACENGECVNQEGSFHCLCNPPLTLDLSGQRCV). Asn-1560 is a glycosylation site (N-linked (GlcNAc...) asparagine). A TB 4 domain is found at 1576–1628 (DICWKKVTNDVCSQPLRGHHTTYTECCCQDGEAWSQQCALCPPRSSEVYAQLC). Intrachain disulfides connect Cys-1578–Cys-1601, Cys-1587–Cys-1613, Cys-1602–Cys-1616, and Cys-1603–Cys-1628. The segment at 1631 to 1813 (ARIEAERGAG…PGPPHCAAKE (183 aa)) is C-terminal domain. Residues 1671–1717 (YLGPEDTAPEPPFSNPASQPGDNTPVLEPPLQPSELQPHYLASHSEP) form a disordered region. The 41-residue stretch at 1725-1765 (QAEECGILNGCENGRCVRVREGYTCDCFEGFQLDAPTLACV) folds into the EGF-like 19; calcium-binding domain. Cystine bridges form between Cys-1729/Cys-1740, Cys-1735/Cys-1749, Cys-1751/Cys-1764, Cys-1770/Cys-1785, Cys-1780/Cys-1794, and Cys-1796/Cys-1809. Residues 1766 to 1810 (DVNECEDLNGPARLCAHGHCENTEGSYRCHCSPGYVAEPGPPHCA) form the EGF-like 20; calcium-binding domain.

The protein belongs to the LTBP family. In terms of assembly, forms part of the large latent transforming growth factor beta precursor complex; removal is essential for activation of complex. Interacts with SDC4. Interacts (via C-terminal domain) with FBN1 (via N-terminal domain) in a Ca(+2)-dependent manner. In terms of processing, N-Glycosylated. Contains hydroxylated asparagine residues. In terms of tissue distribution, expressed in the anterior chamber of the eye.

The protein resides in the secreted. It is found in the extracellular space. It localises to the extracellular matrix. Its function is as follows. May play an integral structural role in elastic-fiber architectural organization and/or assembly. In Mus musculus (Mouse), this protein is Latent-transforming growth factor beta-binding protein 2 (Ltbp2).